The primary structure comprises 655 residues: p-hydroxybenzoic acid efflux pump subunit AaeB (655 aa).

Residues 1–12 lie on the Periplasmic side of the membrane; that stretch reads MGIFSIANQHIR. Residues 13-33 form a helical membrane-spanning segment; sequence FAVKLATAIVLALFVGFHFQL. Residues 34–37 lie on the Cytoplasmic side of the membrane; it reads ETPR. Residues 38 to 58 traverse the membrane as a helical segment; it reads WAVLTAAIVAAGTAFAAGGEP. At 59–68 the chain is on the periplasmic side; the sequence is YSGAIRYRGF. The chain crosses the membrane as a helical span at residues 69–89; that stretch reads LRIIGTFIGCIAGLVIIIAMI. The Cytoplasmic segment spans residues 90–92; it reads RAP. Residues 93 to 113 form a helical membrane-spanning segment; it reads LLMILVCCIWAGFCTWISSLV. Topologically, residues 114–120 are periplasmic; that stretch reads RIENSYA. Residues 121 to 141 traverse the membrane as a helical segment; the sequence is WGLAGYTALIIVITIQPEPLL. At 142–151 the chain is on the cytoplasmic side; it reads TPQFAVERCS. A helical membrane pass occupies residues 152–172; sequence EIVIGIVCAIMADLLFSPRSI. Residues 173 to 369 lie on the Periplasmic side of the membrane; it reads KQEVDRELES…RTTLSCILGT (197 aa). Residues 370 to 390 form a helical membrane-spanning segment; the sequence is LFWLWTGWTSGSGAMVMIAVV. Residues 391–406 lie on the Cytoplasmic side of the membrane; sequence TSLAMRLPNPRMVAID. Residues 407-427 traverse the membrane as a helical segment; that stretch reads FIYGTLAALPLGLLYFLVIIP. Residues 428-430 lie on the Periplasmic side of the membrane; sequence NTQ. A helical transmembrane segment spans residues 431 to 451; it reads QSMLLLCISLAVLGFFLGIEV. Residues 452–458 lie on the Cytoplasmic side of the membrane; that stretch reads QKRRLGS. The chain crosses the membrane as a helical span at residues 459–479; that stretch reads MGALASTINIIVLDNPMTFHF. At 480-481 the chain is on the periplasmic side; that stretch reads SQ. Residues 482 to 502 form a helical membrane-spanning segment; that stretch reads FLDSALGQIVGCVLAFTVILL. The Cytoplasmic segment spans residues 503–655; sequence VRDKSRDRTG…HKYQHALTDS (153 aa).

The protein belongs to the aromatic acid exporter ArAE (TC 2.A.85) family.

It is found in the cell inner membrane. Forms an efflux pump with AaeA. Could function as a metabolic relief valve, allowing to eliminate certain compounds when they accumulate to high levels in the cell. Substrates are p-hydroxybenzoic acid (pHBA), 6-hydroxy-2-naphthoic and 2-hydroxycinnamate. The chain is p-hydroxybenzoic acid efflux pump subunit AaeB from Escherichia coli (strain K12).